The sequence spans 216 residues: Holliday junction branch migration complex subunit RuvA (216 aa).

The interval 1–64 (MISFIKGVLI…EDAQQLYGFK (64 aa)) is domain I. The segment at 65–143 (SKVDKKVFQE…KMANEIYAQT (79 aa)) is domain II. The segment at 144 to 163 (SGTTTTSQDSQAQQAPTSVV) is flexible linker. A domain III region spans residues 164-216 (LANSIFNESVDALLALGYKQKDAEKMARSAMGDATTAAEVIRKALQGSIKSKG).

This sequence belongs to the RuvA family. As to quaternary structure, homotetramer. Forms an RuvA(8)-RuvB(12)-Holliday junction (HJ) complex. HJ DNA is sandwiched between 2 RuvA tetramers; dsDNA enters through RuvA and exits via RuvB. An RuvB hexamer assembles on each DNA strand where it exits the tetramer. Each RuvB hexamer is contacted by two RuvA subunits (via domain III) on 2 adjacent RuvB subunits; this complex drives branch migration. In the full resolvosome a probable DNA-RuvA(4)-RuvB(12)-RuvC(2) complex forms which resolves the HJ.

It is found in the cytoplasm. The RuvA-RuvB-RuvC complex processes Holliday junction (HJ) DNA during genetic recombination and DNA repair, while the RuvA-RuvB complex plays an important role in the rescue of blocked DNA replication forks via replication fork reversal (RFR). RuvA specifically binds to HJ cruciform DNA, conferring on it an open structure. The RuvB hexamer acts as an ATP-dependent pump, pulling dsDNA into and through the RuvAB complex. HJ branch migration allows RuvC to scan DNA until it finds its consensus sequence, where it cleaves and resolves the cruciform DNA. This is Holliday junction branch migration complex subunit RuvA from Francisella tularensis subsp. holarctica (strain FTNF002-00 / FTA).